The sequence spans 447 residues: UDP-N-acetylmuramate--L-alanine ligase (447 aa).

Position 115 to 121 (115 to 121 (GAHGKTS)) interacts with ATP.

Belongs to the MurCDEF family.

It is found in the cytoplasm. The catalysed reaction is UDP-N-acetyl-alpha-D-muramate + L-alanine + ATP = UDP-N-acetyl-alpha-D-muramoyl-L-alanine + ADP + phosphate + H(+). It functions in the pathway cell wall biogenesis; peptidoglycan biosynthesis. Its function is as follows. Cell wall formation. This Streptococcus thermophilus (strain CNRZ 1066) protein is UDP-N-acetylmuramate--L-alanine ligase.